The primary structure comprises 480 residues: Adenylosuccinate synthetase, chloroplastic (480 aa).

The transit peptide at 1–54 directs the protein to the chloroplast; sequence MATARVMVADRARAFGGTTATRARRDDQGRRVTIARGIPSRARVVVARASERAY. GTP contacts are provided by residues 69-75 and 97-99; these read GDEGKGK and GHT. Residue Asp-70 is the Proton acceptor of the active site. Mg(2+) is bound by residues Asp-70 and Gly-97. IMP contacts are provided by residues 70–73, 95–98, Thr-187, Arg-201, Asn-278, Thr-293, and Arg-357; these read DEGK and NAGH. The active-site Proton donor is the His-98. 353–359 is a binding site for substrate; the sequence is TTTGRPR. Residues Arg-359, 385–387, and 468–470 each bind GTP; these read KLD and GVG.

It belongs to the adenylosuccinate synthetase family. Homodimer. The cofactor is Mg(2+).

The protein resides in the plastid. It localises to the chloroplast. It catalyses the reaction IMP + L-aspartate + GTP = N(6)-(1,2-dicarboxyethyl)-AMP + GDP + phosphate + 2 H(+). It functions in the pathway purine metabolism; AMP biosynthesis via de novo pathway; AMP from IMP: step 1/2. In terms of biological role, plays an important role in the de novo pathway and in the salvage pathway of purine nucleotide biosynthesis. Catalyzes the first committed step in the biosynthesis of AMP from IMP. In Ostreococcus tauri, this protein is Adenylosuccinate synthetase, chloroplastic.